The chain runs to 138 residues: Protein X (138 aa).

A disordered region spans residues 20-43; that stretch reads PLRGQPSGPSVSGTSAGSPSSAAS. Over residues 25–43 the composition is skewed to low complexity; sequence PSGPSVSGTSAGSPSSAAS. A mitochondrial targeting sequence region spans residues 68–113; that stretch reads PCCLGFTCADLRTMDSTVNFVPWHAKRQLGMMQKDFWTAYIRDQLL.

The protein belongs to the orthohepadnavirus protein X family. May form homodimer. May interact with host CEBPA, CFLAR, CREB1, DDB1, E4F1, HBXIP, HSPD1/HSP60, NFKBIA, POLR2E and SMAD4. Interacts with host SMC5-SMC6 complex and induces its degradation. Interacts with host TRPC4AP; leading to prevent ubiquitination of TRPC4AP. Interacts with host PLSCR1; this interaction promotes ubiquitination and degradation of HBx and impairs HBx-mediated cell proliferation. Post-translationally, a fraction may be phosphorylated in insect cells and HepG2 cells, a human hepatoblastoma cell line. Phosphorylated in vitro by host protein kinase C or mitogen-activated protein kinase. N-acetylated in insect cells.

The protein localises to the host cytoplasm. It is found in the host nucleus. The protein resides in the host mitochondrion. Its function is as follows. Multifunctional protein that plays a role in silencing host antiviral defenses and promoting viral transcription. Does not seem to be essential for HBV infection. May be directly involved in development of cirrhosis and liver cancer (hepatocellular carcinoma). Most of cytosolic activities involve modulation of cytosolic calcium. The effect on apoptosis is controversial depending on the cell types in which the studies have been conducted. May induce apoptosis by localizing in mitochondria and causing loss of mitochondrial membrane potential. May also modulate apoptosis by binding host CFLAR, a key regulator of the death-inducing signaling complex (DISC). Promotes viral transcription by using the host E3 ubiquitin ligase DDB1 to target the SMC5-SMC6 complex to proteasomal degradation. This host complex would otherwise bind to viral episomal DNA, and prevents its transcription. Moderately stimulates transcription of many different viral and cellular transcription elements. Promoters and enhancers stimulated by HBx contain DNA binding sites for NF-kappa-B, AP-1, AP-2, c-EBP, ATF/CREB, or the calcium-activated factor NF-AT. The polypeptide is Protein X (Ground squirrel hepatitis virus (strain 27) (GSHV)).